We begin with the raw amino-acid sequence, 450 residues long: Glucose-6-phosphate isomerase (450 aa).

Thr39 is modified (phosphothreonine). Glu291 serves as the catalytic Proton donor. Active-site residues include His312 and Lys426.

This sequence belongs to the GPI family.

The protein resides in the cytoplasm. It carries out the reaction alpha-D-glucose 6-phosphate = beta-D-fructose 6-phosphate. It functions in the pathway carbohydrate biosynthesis; gluconeogenesis. It participates in carbohydrate degradation; glycolysis; D-glyceraldehyde 3-phosphate and glycerone phosphate from D-glucose: step 2/4. In terms of biological role, catalyzes the reversible isomerization of glucose-6-phosphate to fructose-6-phosphate. This chain is Glucose-6-phosphate isomerase, found in Halalkalibacterium halodurans (strain ATCC BAA-125 / DSM 18197 / FERM 7344 / JCM 9153 / C-125) (Bacillus halodurans).